Reading from the N-terminus, the 156-residue chain is Biotin carboxyl carrier protein of acetyl-CoA carboxylase (156 aa).

The Biotinyl-binding domain maps to 73–156 (PAAAEISGHI…EFDEPLVVIE (84 aa)). K122 carries the post-translational modification N6-biotinyllysine.

In terms of assembly, homodimer.

It functions in the pathway lipid metabolism; fatty acid biosynthesis. In terms of biological role, this protein is a component of the acetyl coenzyme A carboxylase complex; first, biotin carboxylase catalyzes the carboxylation of the carrier protein and then the transcarboxylase transfers the carboxyl group to form malonyl-CoA. The polypeptide is Biotin carboxyl carrier protein of acetyl-CoA carboxylase (accB) (Escherichia coli O6:H1 (strain CFT073 / ATCC 700928 / UPEC)).